The sequence spans 158 residues: Cyclic pyranopterin monophosphate synthase (158 aa).

Substrate contacts are provided by residues 76 to 78 and 114 to 115; these read LCH and ME. D129 is a catalytic residue.

Belongs to the MoaC family. In terms of assembly, homohexamer; trimer of dimers.

The catalysed reaction is (8S)-3',8-cyclo-7,8-dihydroguanosine 5'-triphosphate = cyclic pyranopterin phosphate + diphosphate. It functions in the pathway cofactor biosynthesis; molybdopterin biosynthesis. Functionally, catalyzes the conversion of (8S)-3',8-cyclo-7,8-dihydroguanosine 5'-triphosphate to cyclic pyranopterin monophosphate (cPMP). This Brucella anthropi (strain ATCC 49188 / DSM 6882 / CCUG 24695 / JCM 21032 / LMG 3331 / NBRC 15819 / NCTC 12168 / Alc 37) (Ochrobactrum anthropi) protein is Cyclic pyranopterin monophosphate synthase.